The primary structure comprises 455 residues: Pentatricopeptide repeat-containing protein At3g26630, chloroplastic (455 aa).

The transit peptide at Met-1–Arg-19 directs the protein to the chloroplast. PPR repeat units follow at residues Asp-51–Pro-81, Ser-82–Phe-117, Asp-118–Asn-152, Asp-153–Ser-187, Trp-188–Arg-214, Asn-215–Pro-249, Asn-250–Leu-284, Asp-285–Lys-315, Ser-316–Glu-350, Asp-352–Pro-387, and Ile-388–Asp-418.

This sequence belongs to the PPR family. PCMP-A subfamily.

It localises to the plastid. It is found in the chloroplast. The protein is Pentatricopeptide repeat-containing protein At3g26630, chloroplastic (PCMP-A6) of Arabidopsis thaliana (Mouse-ear cress).